The sequence spans 1186 residues: Pumilio homolog 1 (1186 aa).

Position 2 is an N-acetylserine (Ser2). The residue at position 19 (Ser19) is a Phosphoserine. A disordered region spans residues 22–73; the sequence is LKHHPQEPANPNMPVVLTSGTGSQAQPQPAANQALAAGTHSSPVPGSIGVAG. Over residues 45-58 the composition is skewed to low complexity; it reads QAQPQPAANQALAA. Ser75, Ser98, and Ser106 each carry phosphoserine. Position 112 is a phosphothreonine (Thr112). Phosphoserine is present on residues Ser124, Ser159, Ser197, Ser209, and Ser229. A disordered region spans residues 233-272; sequence SCLRKGGFGPRDADSDENDKGEKKNKGTFDGDKLGDLKEE. Over residues 250-272 the composition is skewed to basic and acidic residues; it reads NDKGEKKNKGTFDGDKLGDLKEE. Ser305 carries the phosphoserine modification. Residues 485 to 502 show a composition bias toward low complexity; sequence TNSANQQTTPQAQQGQQQ. Disordered stretches follow at residues 485-524 and 613-648; these read TNSA…GQQT and AGTT…FYGN. Residues 511-524 are compositionally biased toward polar residues; the sequence is RPLTPNQNQQGQQT. Thr514 carries the post-translational modification Phosphothreonine. Residues 626-639 show a composition bias toward low complexity; that stretch reads QQPQPQPQQQPNNN. Phosphoserine is present on residues Ser709 and Ser714. Residues 742-773 are disordered; that stretch reads GPVGMPLPSQGPGHSQTPPPSLSSHGSSSSLN. The segment covering 763–773 has biased composition (low complexity); the sequence is LSSHGSSSSLN. Residue Arg796 is modified to Omega-N-methylarginine. Phosphoserine occurs at positions 806 and 822. In terms of domain architecture, PUM-HD spans 828 to 1168; the sequence is GRSRLLEDFR…HILAKLEKYY (341 aa). Pumilio repeat units follow at residues 848–883, 884–919, 920–955, 956–991, 992–1027, 1028–1063, 1064–1099, and 1103–1142; these read EIAG…LVFN, EILQ…ALAE, RIRG…EMVR, ELDG…FIID, AFKG…PILE, ELHQ…KIVA, EIRG…VLID, and TMND…IVMH. An adenine-nucleotide binding in RNA target region spans residues 863–867; the sequence is SRFIQ. The uracil-nucleotide binding in RNA target stretch occupies residues 899 to 903; it reads NYVIQ. Positions 935–939 are adenine-nucleotide binding in RNA target; it reads CRVIQ. The segment at 971–975 is non-specific-nucleotide binding in RNA target; sequence NHVVQ. The segment at 1007 to 1011 is adenine-nucleotide binding in RNA target; the sequence is CRVIQ. The uracil-nucleotide binding in RNA target stretch occupies residues 1043 to 1047; sequence NYVIQ. The interval 1079-1083 is guanine-nucleotide binding in RNA target; that stretch reads SNVVE. Positions 1122–1126 are uracil-nucleotide binding in RNA target; that stretch reads NYVVQ.

Recruits the CCR4-POP2-NOT deadenylase leading to translational inhibition and mRNA degradation. In case of viral infection, interacts with DHX58. Interacts with TRIM71 (via NHL repeats) in an RNA-dependent manner. Phosphorylation at Ser-714 promotes RNA-binding activity. Following growth factor stimulation phosphorylated at Ser-714, promoting binding to the 3'-UTR of CDKN1B/p27 mRNA. Expressed in brain, heart, kidney, muscle, intestine and stomach. Not expressed in cerebellum, corpus callosum, caudate nucleus, hippocampus, medulla oblongata and putamen. Expressed in all fetal tissues tested.

It is found in the cytoplasm. Its subcellular location is the P-body. The protein localises to the cytoplasmic granule. In terms of biological role, sequence-specific RNA-binding protein that acts as a post-transcriptional repressor by binding the 3'-UTR of mRNA targets. Binds to an RNA consensus sequence, the Pumilio Response Element (PRE), 5'-UGUANAUA-3', that is related to the Nanos Response Element (NRE). Mediates post-transcriptional repression of transcripts via different mechanisms: acts via direct recruitment of the CCR4-POP2-NOT deadenylase leading to translational inhibition and mRNA degradation. Also mediates deadenylation-independent repression by promoting accessibility of miRNAs. Following growth factor stimulation, phosphorylated and binds to the 3'-UTR of CDKN1B/p27 mRNA, inducing a local conformational change that exposes miRNA-binding sites, promoting association of miR-221 and miR-222, efficient suppression of CDKN1B/p27 expression, and rapid entry to the cell cycle. Acts as a post-transcriptional repressor of E2F3 mRNAs by binding to its 3'-UTR and facilitating miRNA regulation. Represses a program of genes necessary to maintain genomic stability such as key mitotic, DNA repair and DNA replication factors. Its ability to repress those target mRNAs is regulated by the lncRNA NORAD (non-coding RNA activated by DNA damage) which, due to its high abundance and multitude of PUMILIO binding sites, is able to sequester a significant fraction of PUM1 and PUM2 in the cytoplasm. Involved in neuronal functions by regulating ATXN1 mRNA levels: acts by binding to the 3'-UTR of ATXN1 transcripts, leading to their down-regulation independently of the miRNA machinery. Plays a role in cytoplasmic sensing of viral infection. In testis, acts as a post-transcriptional regulator of spermatogenesis by binding to the 3'-UTR of mRNAs coding for regulators of p53/TP53. Involved in embryonic stem cell renewal by facilitating the exit from the ground state: acts by targeting mRNAs coding for naive pluripotency transcription factors and accelerates their down-regulation at the onset of differentiation. Binds specifically to miRNA MIR199A precursor, with PUM2, regulates miRNA MIR199A expression at a postranscriptional level. The polypeptide is Pumilio homolog 1 (Homo sapiens (Human)).